The primary structure comprises 72 residues: UPF0270 protein YheU (72 aa).

It belongs to the UPF0270 family.

The polypeptide is UPF0270 protein YheU (Salmonella dublin (strain CT_02021853)).